A 325-amino-acid chain; its full sequence is Biotin synthase (325 aa).

A Radical SAM core domain is found at 42 to 270 (YKVQLASLLS…QSRVRLSAGR (229 aa)). [4Fe-4S] cluster contacts are provided by Cys-57, Cys-61, and Cys-64. [2Fe-2S] cluster-binding residues include Cys-101, Cys-133, Cys-193, and Arg-265.

The protein belongs to the radical SAM superfamily. Biotin synthase family. As to quaternary structure, homodimer. [4Fe-4S] cluster serves as cofactor. [2Fe-2S] cluster is required as a cofactor.

The enzyme catalyses (4R,5S)-dethiobiotin + (sulfur carrier)-SH + 2 reduced [2Fe-2S]-[ferredoxin] + 2 S-adenosyl-L-methionine = (sulfur carrier)-H + biotin + 2 5'-deoxyadenosine + 2 L-methionine + 2 oxidized [2Fe-2S]-[ferredoxin]. It functions in the pathway cofactor biosynthesis; biotin biosynthesis; biotin from 7,8-diaminononanoate: step 2/2. In terms of biological role, catalyzes the conversion of dethiobiotin (DTB) to biotin by the insertion of a sulfur atom into dethiobiotin via a radical-based mechanism. The sequence is that of Biotin synthase from Synechococcus sp. (strain WH7803).